A 74-amino-acid chain; its full sequence is Acyl carrier protein (74 aa).

Residues 1 to 73 (MAVFEKVQEI…DLVAYVEEQA (73 aa)) enclose the Carrier domain. O-(pantetheine 4'-phosphoryl)serine is present on Ser35.

Belongs to the acyl carrier protein (ACP) family. Post-translationally, 4'-phosphopantetheine is transferred from CoA to a specific serine of apo-ACP by AcpS. This modification is essential for activity because fatty acids are bound in thioester linkage to the sulfhydryl of the prosthetic group.

It is found in the cytoplasm. It participates in lipid metabolism; fatty acid biosynthesis. Carrier of the growing fatty acid chain in fatty acid biosynthesis. In Streptococcus pneumoniae serotype 4 (strain ATCC BAA-334 / TIGR4), this protein is Acyl carrier protein.